Reading from the N-terminus, the 278-residue chain is Potassium/proton antiporter CemA (278 aa).

Transmembrane regions (helical) follow at residues 61 to 81 (ILLL…FVFG), 155 to 175 (AVKN…LMIT), 203 to 223 (IILF…EVII), and 238 to 258 (FIFL…KYWI).

The protein belongs to the CemA family.

It localises to the plastid. It is found in the chloroplast inner membrane. The catalysed reaction is K(+)(in) + H(+)(out) = K(+)(out) + H(+)(in). Its function is as follows. Contributes to K(+)/H(+) antiport activity by supporting proton efflux to control proton extrusion and homeostasis in chloroplasts in a light-dependent manner to modulate photosynthesis. Prevents excessive induction of non-photochemical quenching (NPQ) under continuous-light conditions. Indirectly promotes efficient inorganic carbon uptake into chloroplasts. This Pyropia yezoensis (Susabi-nori) protein is Potassium/proton antiporter CemA.